We begin with the raw amino-acid sequence, 317 residues long: Apolipoprotein E (317 aa).

The signal sequence occupies residues 1 to 18 (MKVLWVALVITLLAGCQA). 8 repeat units span residues 80–101 (VLMDETMKEVKAYREELEEQLG), 102–123 (PVAQETQARVSKELQAAQARLA), 124–145 (SDMQDVRGRLAQYRSEVQAMMG), 146–167 (HTTDELRDRLASHLRKLRKRLL), 168–189 (RDAEDLQKRLAVYRAGALEGSE), 190–211 (RSVSAIRERLGPLVEQGRARAA), 212–233 (TVGTLASQTLRERAEAWHQKLR), and 234–255 (GRVEEMGTQARDHLEEMREQLD). The 8 X 22 AA approximate tandem repeats stretch occupies residues 80-255 (VLMDETMKEV…HLEEMREQLD (176 aa)). Met143 carries the post-translational modification Methionine sulfoxide. Positions 158 to 168 (HLRKLRKRLLR) are LDL and other lipoprotein receptors binding. 162-165 (LRKR) provides a ligand contact to heparin. The interval 210-290 (AATVGTLASQ…SWFEPLVEDM (81 aa)) is lipid-binding and lipoprotein association. 229 to 236 (HQKLRGRV) is a heparin binding site. A homooligomerization region spans residues 266-317 (TQMRLQAEAFQARLKSWFEPLVEDMQRQWAGLVEKVQLAMATSSTSAPSENH). The specificity for association with VLDL stretch occupies residues 278–290 (RLKSWFEPLVEDM).

Belongs to the apolipoprotein A1/A4/E family. In terms of assembly, homotetramer. May interact with ABCA1; functionally associated with ABCA1 in the biogenesis of HDLs. May interact with APP/A4 amyloid-beta peptide; the interaction is extremely stable in vitro but its physiological significance is unclear. May interact with MAPT. May interact with MAP2. In the cerebrospinal fluid, interacts with secreted SORL1. Interacts with PMEL; this allows the loading of PMEL luminal fragment on ILVs to induce fibril nucleation. APOE exists as multiple glycosylated and sialylated glycoforms within cells and in plasma. The extent of glycosylation and sialylation are tissue and context specific. In terms of processing, glycated in plasma VLDL. Post-translationally, phosphorylated by FAM20C in the extracellular medium.

The protein resides in the secreted. Its subcellular location is the extracellular space. It is found in the extracellular matrix. It localises to the extracellular vesicle. The protein localises to the endosome. The protein resides in the multivesicular body. In terms of biological role, APOE is an apolipoprotein, a protein associating with lipid particles, that mainly functions in lipoprotein-mediated lipid transport between organs via the plasma and interstitial fluids. APOE is a core component of plasma lipoproteins and is involved in their production, conversion and clearance. Apolipoproteins are amphipathic molecules that interact both with lipids of the lipoprotein particle core and the aqueous environment of the plasma. As such, APOE associates with chylomicrons, chylomicron remnants, very low density lipoproteins (VLDL) and intermediate density lipoproteins (IDL) but shows a preferential binding to high-density lipoproteins (HDL). It also binds a wide range of cellular receptors including the LDL receptor/LDLR and the very low-density lipoprotein receptor/VLDLR that mediate the cellular uptake of the APOE-containing lipoprotein particles. Finally, APOE also has a heparin-binding activity and binds heparan-sulfate proteoglycans on the surface of cells, a property that supports the capture and the receptor-mediated uptake of APOE-containing lipoproteins by cells. This chain is Apolipoprotein E (APOE), found in Physeter macrocephalus (Sperm whale).